The primary structure comprises 142 residues: Large ribosomal subunit protein bL17 (142 aa).

The protein belongs to the bacterial ribosomal protein bL17 family. As to quaternary structure, part of the 50S ribosomal subunit. Contacts protein L32.

This Brucella canis (strain ATCC 23365 / NCTC 10854 / RM-666) protein is Large ribosomal subunit protein bL17.